The primary structure comprises 347 residues: Histone deacetylase 11 (347 aa).

A histone deacetylase region spans residues 14 to 326 (TRWPIVYSPR…LNLFGLGLIG (313 aa)). H143 is an active-site residue.

The protein belongs to the histone deacetylase family. As to quaternary structure, interacts with HDAC6. In terms of tissue distribution, weakly expressed in most tissues. Strongly expressed in brain, heart, skeletal muscle, kidney and testis.

Its subcellular location is the nucleus. It carries out the reaction N(6)-acetyl-L-lysyl-[histone] + H2O = L-lysyl-[histone] + acetate. Functionally, responsible for the deacetylation of lysine residues on the N-terminal part of the core histones (H2A, H2B, H3 and H4). Histone deacetylation gives a tag for epigenetic repression and plays an important role in transcriptional regulation, cell cycle progression and developmental events. Histone deacetylases act via the formation of large multiprotein complexes. This Homo sapiens (Human) protein is Histone deacetylase 11 (HDAC11).